Here is a 303-residue protein sequence, read N- to C-terminus: MNKQNFHHISVLKKEAIDFLKIKPEGIYVDATLGQCGHTIEIANLLQQGFLYSFDQDVEACTNAKKTLSPHLPIEIIHSIFRIXSPISTTKSFSLDGILFDLGLSSCQIDNPQRGFSYLHNTPLDMRMNINQTITAQYILNNYSFAQLKNIFKLYGEVKNASLVVSEIIKQRPLQTSYDLVSITDRFCNLQKGHSAKKIFQALRIEVNQELESLKQALEQSLDLLKPNARIVVISFHSLEDRIIKHFFKKHSTFVLPKKLPIAIIPQTPLSIITKKAFLPSEEEMQNNSRSISAKLRVAVKNV.

S-adenosyl-L-methionine-binding positions include 36–38 (CGH), Asp55, Phe81, Asp101, and Gln108.

This sequence belongs to the methyltransferase superfamily. RsmH family.

The protein localises to the cytoplasm. The enzyme catalyses cytidine(1402) in 16S rRNA + S-adenosyl-L-methionine = N(4)-methylcytidine(1402) in 16S rRNA + S-adenosyl-L-homocysteine + H(+). In terms of biological role, specifically methylates the N4 position of cytidine in position 1402 (C1402) of 16S rRNA. The polypeptide is Ribosomal RNA small subunit methyltransferase H (Aster yellows witches'-broom phytoplasma (strain AYWB)).